Reading from the N-terminus, the 499-residue chain is Dual specificity protein kinase CLK2 (499 aa).

Residues 1–67 (MPHPRRYHSS…SYDDRSSDRR (67 aa)) are disordered. Residues 8–21 (HSSERGSRGSYREH) are compositionally biased toward basic and acidic residues. Over residues 22 to 33 (YRSRKHKRRRSR) the composition is skewed to basic residues. Ser-34 is subject to Phosphoserine; by PKB/AKT1. Basic and acidic residues predominate over residues 47–67 (REDSYHVRSRSSYDDRSSDRR). At Ser-98 the chain carries Phosphoserine. A Phosphotyrosine; by autocatalysis modification is found at Tyr-99. The interval 101–143 (YQRENSSYRSQRSSRRKHRRRRRRSRTFSRSSSQHSSRRAKSV) is disordered. The span at 112–127 (RSSRRKHRRRRRRSRT) shows a compositional bias: basic residues. Thr-127 is modified (phosphothreonine; by PKB/AKT1). Ser-142 is modified (phosphoserine; by autocatalysis). Tyr-153 bears the Phosphotyrosine mark. In terms of domain architecture, Protein kinase spans 163–479 (YEIVSTLGEG…LGEALQHPFF (317 aa)). ATP-binding positions include 169–177 (LGEGTFGRV) and Lys-193. Asp-290 serves as the catalytic Proton acceptor. Thr-344 is subject to Phosphothreonine; by PKB/AKT2.

Belongs to the protein kinase superfamily. CMGC Ser/Thr protein kinase family. Lammer subfamily. Interacts with RBMX. Interacts with AKT1 and UBL5. Post-translationally, autophosphorylates on all three types of residues. Phosphorylation on Ser-34 and Thr-127 by AKT1 is induced by ionizing radiation or insulin. Phosphorylation plays a critical role in cell proliferation following low dose radiation and prevents cell death following high dose radiation. Phosphorylation at Thr-344 by PKB/AKT2 induces its kinase activity which is required for its stability. The phosphorylation status at Ser-142 influences its subnuclear localization; inhibition of phosphorylation at Ser-142 results in accumulation in the nuclear speckle. As to expression, endothelial cells. Expressed in androgen-dependent prostate cancer cells.

It localises to the nucleus. Its subcellular location is the nucleus speckle. The catalysed reaction is L-seryl-[protein] + ATP = O-phospho-L-seryl-[protein] + ADP + H(+). It catalyses the reaction L-threonyl-[protein] + ATP = O-phospho-L-threonyl-[protein] + ADP + H(+). The enzyme catalyses L-tyrosyl-[protein] + ATP = O-phospho-L-tyrosyl-[protein] + ADP + H(+). 5,6-dichloro-1-b-D-ribofuranosylbenzimidazole (DRB) inhibits autophosphorylation. TG003 inhibits its kinase activity and affects the regulation of alternative splicing mediated by phosphorylation of SR proteins. In terms of biological role, dual specificity kinase acting on both serine/threonine and tyrosine-containing substrates. Phosphorylates serine- and arginine-rich (SR) proteins of the spliceosomal complex. May be a constituent of a network of regulatory mechanisms that enable SR proteins to control RNA splicing and can cause redistribution of SR proteins from speckles to a diffuse nucleoplasmic distribution. Acts as a suppressor of hepatic gluconeogenesis and glucose output by repressing PPARGC1A transcriptional activity on gluconeogenic genes via its phosphorylation. Phosphorylates PPP2R5B thereby stimulating the assembly of PP2A phosphatase with the PPP2R5B-AKT1 complex leading to dephosphorylation of AKT1. Phosphorylates: PTPN1, SRSF1 and SRSF3. Regulates the alternative splicing of tissue factor (F3) pre-mRNA in endothelial cells. Phosphorylates PAGE4 at several serine and threonine residues and this phosphorylation attenuates the ability of PAGE4 to potentiate the transcriptional activator activity of JUN. The chain is Dual specificity protein kinase CLK2 (CLK2) from Homo sapiens (Human).